We begin with the raw amino-acid sequence, 490 residues long: Membrane-bound lytic murein transglycosylase F (490 aa).

A signal peptide spans Met1–Ala32. Residues Pro33–Val269 form a non-LT domain region. Residues Asp270–Leu490 are LT domain. Glu316 is a catalytic residue. Residues Ala467–Leu490 form a disordered region.

This sequence in the N-terminal section; belongs to the bacterial solute-binding protein 3 family. In the C-terminal section; belongs to the transglycosylase Slt family.

It is found in the cell outer membrane. The catalysed reaction is Exolytic cleavage of the (1-&gt;4)-beta-glycosidic linkage between N-acetylmuramic acid (MurNAc) and N-acetylglucosamine (GlcNAc) residues in peptidoglycan, from either the reducing or the non-reducing ends of the peptidoglycan chains, with concomitant formation of a 1,6-anhydrobond in the MurNAc residue.. Its function is as follows. Murein-degrading enzyme that degrades murein glycan strands and insoluble, high-molecular weight murein sacculi, with the concomitant formation of a 1,6-anhydromuramoyl product. Lytic transglycosylases (LTs) play an integral role in the metabolism of the peptidoglycan (PG) sacculus. Their lytic action creates space within the PG sacculus to allow for its expansion as well as for the insertion of various structures such as secretion systems and flagella. The polypeptide is Membrane-bound lytic murein transglycosylase F (Pseudomonas paraeruginosa (strain DSM 24068 / PA7) (Pseudomonas aeruginosa (strain PA7))).